We begin with the raw amino-acid sequence, 360 residues long: Peptide chain release factor 1 (360 aa).

Q235 bears the N5-methylglutamine mark. A compositionally biased stretch (basic and acidic residues) spans E283 to A293. The interval E283–D305 is disordered.

It belongs to the prokaryotic/mitochondrial release factor family. Post-translationally, methylated by PrmC. Methylation increases the termination efficiency of RF1.

The protein localises to the cytoplasm. Peptide chain release factor 1 directs the termination of translation in response to the peptide chain termination codons UAG and UAA. This is Peptide chain release factor 1 from Ralstonia pickettii (strain 12J).